The sequence spans 316 residues: D-alanine--D-alanine ligase (316 aa).

The region spanning K109 to A304 is the ATP-grasp domain. ATP is bound at residue A135–T190. Residues D258, E271, and N273 each coordinate Mg(2+).

The protein belongs to the D-alanine--D-alanine ligase family. Mg(2+) is required as a cofactor. Requires Mn(2+) as cofactor.

The protein resides in the cytoplasm. It carries out the reaction 2 D-alanine + ATP = D-alanyl-D-alanine + ADP + phosphate + H(+). It functions in the pathway cell wall biogenesis; peptidoglycan biosynthesis. Cell wall formation. The chain is D-alanine--D-alanine ligase from Nitrosococcus oceani (strain ATCC 19707 / BCRC 17464 / JCM 30415 / NCIMB 11848 / C-107).